Here is a 68-residue protein sequence, read N- to C-terminus: Large ribosomal subunit protein uL29 (68 aa).

Belongs to the universal ribosomal protein uL29 family.

The chain is Large ribosomal subunit protein uL29 from Leuconostoc citreum (strain KM20).